Consider the following 277-residue polypeptide: 5-formyltetrahydrofolate cyclo-ligase, mitochondrial (277 aa).

The transit peptide at 1–48 (MIGARVFCITTTALRRSPIFFFPKIPTRPVFRLSPATRPIVAMSTTSK) directs the protein to the mitochondrion. 60 to 64 (KRVVR) lines the ATP pocket. Substrate is bound by residues Glu113 and 207–211 (RGGGY). ATP contacts are provided by residues 206–213 (GRGGGYYD) and Asp254.

It belongs to the 5-formyltetrahydrofolate cyclo-ligase family. In terms of assembly, monomer.

It localises to the mitochondrion. The enzyme catalyses (6S)-5-formyl-5,6,7,8-tetrahydrofolate + ATP = (6R)-5,10-methenyltetrahydrofolate + ADP + phosphate. Its function is as follows. Contributes to tetrahydrofolate metabolism and photorespiration through the regulation of serine hydroxymethyltransferase. Prefers the pentalutamyl to the monoglutamyl form of 5-formyltetrahydrofolate. This chain is 5-formyltetrahydrofolate cyclo-ligase, mitochondrial (5FCL), found in Arabidopsis thaliana (Mouse-ear cress).